We begin with the raw amino-acid sequence, 482 residues long: MPIVISDTLTGTKRELQPIEPGKIRFYACGPTVYDSAHVGHGRSYVVWDLVVRHLRARGYEVRYVRNFTDVDDKIIRRATERREDPVALAARYAREFDEDMDALGNLRPDVAPKVSEHVPQIVAMISSLVEKGFAYAAANGDVYFSVRAFPDYGRLSKRNLDDLLSGARVEPGEAKRDPLDFALWKAAKPGEPTWDSPWGGGRPGWHIECSAMTLAHLGVPIDLHGGGKDLVFPHHTNEIAQSAAAVGDGRTAESFCRHWMHHGFVEIDSEKMSKSLGNFFTLRDVLAKFDAEGVRLFYLGTHYRNPINYSDAILAEAERRLNYFYETLEKVDALAEGTSPAGEGGGVVEDARRALDDDFNAPQVLAVLAEAFTAANALADKRGKKTPEDRARLAAFARDVREIGTTLGLVQRRPAEALRAIRARAAARRGIDPASVEAKIVERAEARRARDFARSDAIRDALLAQGVALMDGPQGTTWKVE.

Residue Cys-29 coordinates Zn(2+). Positions Pro-31 to His-41 match the 'HIGH' region motif. 3 residues coordinate Zn(2+): Cys-210, His-235, and Glu-239. The short motif at Lys-272–Ser-276 is the 'KMSKS' region element. Lys-275 serves as a coordination point for ATP.

The protein belongs to the class-I aminoacyl-tRNA synthetase family. As to quaternary structure, monomer. The cofactor is Zn(2+).

It is found in the cytoplasm. The enzyme catalyses tRNA(Cys) + L-cysteine + ATP = L-cysteinyl-tRNA(Cys) + AMP + diphosphate. The polypeptide is Cysteine--tRNA ligase (Anaeromyxobacter sp. (strain Fw109-5)).